The chain runs to 425 residues: UDP-N-acetylglucosamine 1-carboxyvinyltransferase (425 aa).

Position 24–25 (24–25 (KN)) interacts with phosphoenolpyruvate. Arg95 lines the UDP-N-acetyl-alpha-D-glucosamine pocket. The active-site Proton donor is the Cys119. Cys119 carries the 2-(S-cysteinyl)pyruvic acid O-phosphothioketal modification. UDP-N-acetyl-alpha-D-glucosamine-binding positions include 124–128 (RPVDQ), Asp308, and Val330.

The protein belongs to the EPSP synthase family. MurA subfamily.

The protein localises to the cytoplasm. The catalysed reaction is phosphoenolpyruvate + UDP-N-acetyl-alpha-D-glucosamine = UDP-N-acetyl-3-O-(1-carboxyvinyl)-alpha-D-glucosamine + phosphate. It functions in the pathway cell wall biogenesis; peptidoglycan biosynthesis. Functionally, cell wall formation. Adds enolpyruvyl to UDP-N-acetylglucosamine. This Deinococcus deserti (strain DSM 17065 / CIP 109153 / LMG 22923 / VCD115) protein is UDP-N-acetylglucosamine 1-carboxyvinyltransferase.